Reading from the N-terminus, the 35-residue chain is Mu-theraphotoxin-Pn3b (35 aa).

3 disulfides stabilise this stretch: cysteine 2-cysteine 16, cysteine 9-cysteine 21, and cysteine 15-cysteine 28.

It belongs to the neurotoxin 10 (Hwtx-1) family. 28 (Jztx-11) subfamily. In terms of tissue distribution, expressed by the venom gland.

Its subcellular location is the secreted. Its function is as follows. Gating-modifier toxin that targets voltage-gated sodium channels with a preferential activity on Nav1.7/SCN9A. On Nav1.7/SCN9A, the toxin acts by shifting the voltage-dependence of activation to more depolarized potentials, whereas it does not cause significant effect on the voltage-dependence of activation on other sodium channels. Minor effects are observed on the voltage-dependence of steady-state fast inactivation for all sodium channels tested (Nav1.1/SCN1A-Nav1.8/SCN10A). By testing the toxin on channel chimera, it has been shown to interact with the S3-S4 linkers in DII and DIV domains of Nav1.7/SCN9A. In vivo, the toxin dose-dependently reduces OD1-induced spontaneous pain behaviors. The sequence is that of Mu-theraphotoxin-Pn3b from Pamphobeteus nigricolor (Giant blue bloom tarantula).